The sequence spans 360 residues: Phosphoserine aminotransferase (360 aa).

Arg-43 provides a ligand contact to L-glutamate. Residues 77-78 (AS), Trp-103, Thr-152, Asp-172, and Gln-195 contribute to the pyridoxal 5'-phosphate site. Lys-196 is modified (N6-(pyridoxal phosphate)lysine). 237–238 (NT) lines the pyridoxal 5'-phosphate pocket.

This sequence belongs to the class-V pyridoxal-phosphate-dependent aminotransferase family. SerC subfamily. As to quaternary structure, homodimer. Pyridoxal 5'-phosphate serves as cofactor.

It localises to the cytoplasm. The enzyme catalyses O-phospho-L-serine + 2-oxoglutarate = 3-phosphooxypyruvate + L-glutamate. The catalysed reaction is 4-(phosphooxy)-L-threonine + 2-oxoglutarate = (R)-3-hydroxy-2-oxo-4-phosphooxybutanoate + L-glutamate. It participates in amino-acid biosynthesis; L-serine biosynthesis; L-serine from 3-phospho-D-glycerate: step 2/3. The protein operates within cofactor biosynthesis; pyridoxine 5'-phosphate biosynthesis; pyridoxine 5'-phosphate from D-erythrose 4-phosphate: step 3/5. Functionally, catalyzes the reversible conversion of 3-phosphohydroxypyruvate to phosphoserine and of 3-hydroxy-2-oxo-4-phosphonooxybutanoate to phosphohydroxythreonine. The polypeptide is Phosphoserine aminotransferase (Syntrophobacter fumaroxidans (strain DSM 10017 / MPOB)).